We begin with the raw amino-acid sequence, 126 residues long: Methylglyoxal synthase (126 aa).

One can recognise an MGS-like domain in the interval 1 to 126 (MEKKIALIAH…LIKGFEGLNT (126 aa)). Substrate contacts are provided by residues H10, K14, 36–39 (TGTT), and 56–57 (SG). The active-site Proton donor/acceptor is the D62. H89 serves as a coordination point for substrate.

It belongs to the methylglyoxal synthase family.

It catalyses the reaction dihydroxyacetone phosphate = methylglyoxal + phosphate. In terms of biological role, catalyzes the formation of methylglyoxal from dihydroxyacetone phosphate. This chain is Methylglyoxal synthase, found in Borrelia garinii subsp. bavariensis (strain ATCC BAA-2496 / DSM 23469 / PBi) (Borreliella bavariensis).